Here is a 466-residue protein sequence, read N- to C-terminus: Adenosylhomocysteinase (466 aa).

Thr-57, Asp-132, and Glu-192 together coordinate substrate. NAD(+) is bound at residue 193–195; it reads TTT. Residues Lys-222 and Asp-226 each contribute to the substrate site. NAD(+) is bound by residues Asn-227, 256-261, Glu-279, Asn-314, 335-337, and Asn-380; these read GYGDVG and IGH.

This sequence belongs to the adenosylhomocysteinase family. It depends on NAD(+) as a cofactor.

It is found in the cytoplasm. It carries out the reaction S-adenosyl-L-homocysteine + H2O = L-homocysteine + adenosine. It participates in amino-acid biosynthesis; L-homocysteine biosynthesis; L-homocysteine from S-adenosyl-L-homocysteine: step 1/1. Functionally, may play a key role in the regulation of the intracellular concentration of adenosylhomocysteine. This Brucella melitensis biotype 2 (strain ATCC 23457) protein is Adenosylhomocysteinase.